We begin with the raw amino-acid sequence, 160 residues long: Nutritionally-regulated adipose and cardiac enriched protein homolog (160 aa).

A disordered region spans residues 1–69 (MRTAAGAVSP…AKPQRTSRRV (69 aa)). 2 stretches are compositionally biased toward basic and acidic residues: residues 12 to 25 (SRPE…KNEE) and 33 to 42 (CRAEREDNRK). A helical membrane pass occupies residues 101-121 (GGSLLLQLCVCVLLVLALGLY).

It localises to the cell membrane. This chain is Nutritionally-regulated adipose and cardiac enriched protein homolog (NRAC), found in Homo sapiens (Human).